A 378-amino-acid chain; its full sequence is UDP-N-acetylenolpyruvoylglucosamine reductase (378 aa).

The 171-residue stretch at Val15–His185 folds into the FAD-binding PCMH-type domain. Arg163 is a catalytic residue. Ser248 serves as the catalytic Proton donor. Glu370 is an active-site residue.

Belongs to the MurB family. It depends on FAD as a cofactor.

The protein localises to the cytoplasm. The enzyme catalyses UDP-N-acetyl-alpha-D-muramate + NADP(+) = UDP-N-acetyl-3-O-(1-carboxyvinyl)-alpha-D-glucosamine + NADPH + H(+). It participates in cell wall biogenesis; peptidoglycan biosynthesis. In terms of biological role, cell wall formation. In Leifsonia xyli subsp. xyli (strain CTCB07), this protein is UDP-N-acetylenolpyruvoylglucosamine reductase.